The primary structure comprises 588 residues: Adenine deaminase (588 aa).

The protein belongs to the metallo-dependent hydrolases superfamily. Adenine deaminase family. Homodimer. Mn(2+) is required as a cofactor.

The catalysed reaction is adenine + H2O + H(+) = hypoxanthine + NH4(+). The polypeptide is Adenine deaminase (Escherichia coli O9:H4 (strain HS)).